Reading from the N-terminus, the 175-residue chain is Ribosome maturation factor RimM (175 aa).

Positions Asn97–Trp170 constitute a PRC barrel domain.

The protein belongs to the RimM family. As to quaternary structure, binds ribosomal protein uS19.

The protein localises to the cytoplasm. Its function is as follows. An accessory protein needed during the final step in the assembly of 30S ribosomal subunit, possibly for assembly of the head region. Essential for efficient processing of 16S rRNA. May be needed both before and after RbfA during the maturation of 16S rRNA. It has affinity for free ribosomal 30S subunits but not for 70S ribosomes. In Dichelobacter nodosus (strain VCS1703A), this protein is Ribosome maturation factor RimM.